A 417-amino-acid chain; its full sequence is MSLTNKLSIKDLDLKNKRVFIRVDFNVPLDGTTITNNQRIVAALPSIKYAIDQGAKAVILASHLGRPNGQRVEKYSLKPVQAELSKLLGKPVTFLDDCVGPKVEEEVSKAKDGEVILLENLRFHPEEEGSHKDADGKKIKADPAKVEEFRKSLTSLADVYVNDAFGTAHRAHSSMVGIELPQRAAGFLVAKELEFFAKALEHPERPFLAILGGAKVSDKIQLIDNLLDKVNALIIGGGMAFTFKKTLENVKIGNSLFDEDGSKIVAGLVEKAKKNNVKLVFPVDYVTADKFSKDAKVGHATDAEGIPDGWQGLDCGPKSIEEFQKVIGESKTILWNGPPGVFEFDNFAKGTKAVLDACVKAVDNGATVIIGGGDTATVAKKYGAEDKLSHVSTGGGASLELLEGKTLPGVAALSEKK.

The (2R)-3-phosphoglycerate site is built by Val23, Asp24, Phe25, Asn26, Gln38, Arg39, Ser62, His63, Gly65, Arg66, Leu121, Arg122, His169, and Arg170. Gly213 lines the ADP pocket. Residue Gly213 coordinates CDP. AMP contacts are provided by Ala214 and Lys215. Ala214 provides a ligand contact to ATP. Residue Ala214 participates in Mg(2+) binding. Asp218 contacts CDP. Asp218 is a binding site for Mg(2+). Position 219 (Lys219) interacts with AMP. Lys219 is a binding site for ATP. Gly237 contributes to the ADP binding site. Gly237 contacts CDP. Positions 238 and 312 each coordinate AMP. Positions 238 and 312 each coordinate ATP. 2 residues coordinate CDP: Gly337 and Phe342. Phe342 is an ADP binding site. Residue Glu343 participates in AMP binding. Positions 343, 374, and 375 each coordinate ATP. Mg(2+) is bound at residue Asp374.

This sequence belongs to the phosphoglycerate kinase family. Monomer. Mg(2+) serves as cofactor.

The protein localises to the cytoplasm. It localises to the mitochondrion. It catalyses the reaction (2R)-3-phosphoglycerate + ATP = (2R)-3-phospho-glyceroyl phosphate + ADP. Its pathway is carbohydrate degradation; glycolysis; pyruvate from D-glyceraldehyde 3-phosphate: step 2/5. In terms of biological role, catalyzes one of the two ATP producing reactions in the glycolytic pathway via the reversible conversion of 1,3-diphosphoglycerate to 3-phosphoglycerate. Both L- and D- forms of purine and pyrimidine nucleotides can be used as substrates, but the activity is much lower on pyrimidines. Negatively regulates the biosynthesis of acetyl-CoA from pyruvate in the mitochondrion. In Yarrowia lipolytica (strain CLIB 122 / E 150) (Yeast), this protein is Phosphoglycerate kinase (PGK1).